Reading from the N-terminus, the 333-residue chain is Phenylalanine--tRNA ligase alpha subunit (333 aa).

Position 248 (E248) interacts with Mg(2+).

It belongs to the class-II aminoacyl-tRNA synthetase family. Phe-tRNA synthetase alpha subunit type 1 subfamily. In terms of assembly, tetramer of two alpha and two beta subunits. Mg(2+) is required as a cofactor.

The protein localises to the cytoplasm. It catalyses the reaction tRNA(Phe) + L-phenylalanine + ATP = L-phenylalanyl-tRNA(Phe) + AMP + diphosphate + H(+). This Ureaplasma parvum serovar 3 (strain ATCC 27815 / 27 / NCTC 11736) protein is Phenylalanine--tRNA ligase alpha subunit.